Reading from the N-terminus, the 322-residue chain is Phosphatidylserine decarboxylase proenzyme (322 aa).

Catalysis depends on charge relay system; for autoendoproteolytic cleavage activity residues aspartate 90, histidine 147, and serine 254. The Schiff-base intermediate with substrate; via pyruvic acid; for decarboxylase activity role is filled by serine 254. Serine 254 carries the pyruvic acid (Ser); by autocatalysis modification. Residues 296 to 322 (EPAPLPAEEIKAEHDASPLVDNKKDDT) are disordered. Basic and acidic residues predominate over residues 303 to 322 (EEIKAEHDASPLVDNKKDDT).

It belongs to the phosphatidylserine decarboxylase family. PSD-B subfamily. Prokaryotic type I sub-subfamily. Heterodimer of a large membrane-associated beta subunit and a small pyruvoyl-containing alpha subunit. The cofactor is pyruvate. In terms of processing, is synthesized initially as an inactive proenzyme. Formation of the active enzyme involves a self-maturation process in which the active site pyruvoyl group is generated from an internal serine residue via an autocatalytic post-translational modification. Two non-identical subunits are generated from the proenzyme in this reaction, and the pyruvate is formed at the N-terminus of the alpha chain, which is derived from the carboxyl end of the proenzyme. The autoendoproteolytic cleavage occurs by a canonical serine protease mechanism, in which the side chain hydroxyl group of the serine supplies its oxygen atom to form the C-terminus of the beta chain, while the remainder of the serine residue undergoes an oxidative deamination to produce ammonia and the pyruvoyl prosthetic group on the alpha chain. During this reaction, the Ser that is part of the protease active site of the proenzyme becomes the pyruvoyl prosthetic group, which constitutes an essential element of the active site of the mature decarboxylase.

It localises to the cell membrane. The catalysed reaction is a 1,2-diacyl-sn-glycero-3-phospho-L-serine + H(+) = a 1,2-diacyl-sn-glycero-3-phosphoethanolamine + CO2. Its pathway is phospholipid metabolism; phosphatidylethanolamine biosynthesis; phosphatidylethanolamine from CDP-diacylglycerol: step 2/2. Functionally, catalyzes the formation of phosphatidylethanolamine (PtdEtn) from phosphatidylserine (PtdSer). The chain is Phosphatidylserine decarboxylase proenzyme from Salmonella dublin (strain CT_02021853).